We begin with the raw amino-acid sequence, 756 residues long: Polyribonucleotide nucleotidyltransferase (756 aa).

Residues D492 and D498 each contribute to the Mg(2+) site. In terms of domain architecture, KH spans 559 to 618; the sequence is PQHAEVFVNPDVIRIIIGPGGKNIKAITAATGASIDIEDSGKVSIFAPTYEAMEMAREMV. The S1 motif domain maps to 628–702; sequence GKNYVGKVRK…SRKAVLLEEQ (75 aa). The interval 703–756 is disordered; sequence GVEWNPEDTARPSGPPRDRGDRGDRGGRGDRGGDRRGGDRGGRGGDRGRGGDRR. The segment covering 718 to 756 has biased composition (basic and acidic residues); sequence PRDRGDRGDRGGRGDRGGDRRGGDRGGRGGDRGRGGDRR.

The protein belongs to the polyribonucleotide nucleotidyltransferase family. It depends on Mg(2+) as a cofactor.

It is found in the cytoplasm. It carries out the reaction RNA(n+1) + phosphate = RNA(n) + a ribonucleoside 5'-diphosphate. Functionally, involved in mRNA degradation. Catalyzes the phosphorolysis of single-stranded polyribonucleotides processively in the 3'- to 5'-direction. The chain is Polyribonucleotide nucleotidyltransferase from Nitratidesulfovibrio vulgaris (strain DSM 19637 / Miyazaki F) (Desulfovibrio vulgaris).